A 300-amino-acid polypeptide reads, in one-letter code: Type II restriction enzyme HindIII (300 aa).

The catalysed reaction is Endonucleolytic cleavage of DNA to give specific double-stranded fragments with terminal 5'-phosphates.. Functionally, a P subtype restriction enzyme that recognizes the double-stranded sequence 5'-AAGCTT-3' and cleaves after A-1. This chain is Type II restriction enzyme HindIII, found in Haemophilus influenzae (strain ATCC 51907 / DSM 11121 / KW20 / Rd).